We begin with the raw amino-acid sequence, 72 residues long: Sec-independent protein translocase protein TatA (72 aa).

A helical transmembrane segment spans residues 1 to 21; sequence MLGGISIWQLLIVLAILVLIF.

This sequence belongs to the TatA/E family. As to quaternary structure, the Tat system comprises two distinct complexes: a TatABC complex, containing multiple copies of TatA, TatB and TatC subunits, and a separate TatA complex, containing only TatA subunits. Substrates initially bind to the TatABC complex, which probably triggers association of the separate TatA complex to form the active translocon.

It localises to the cell inner membrane. In terms of biological role, part of the twin-arginine translocation (Tat) system that transports large folded proteins containing a characteristic twin-arginine motif in their signal peptide across membranes. TatA could form the protein-conducting channel of the Tat system. This chain is Sec-independent protein translocase protein TatA, found in Marinomonas sp. (strain MWYL1).